The sequence spans 215 residues: Cytochrome b6 (215 aa).

A helical membrane pass occupies residues 32–52; the sequence is IFYCFGGIVFTCFLVQVATGF. Position 35 (Cys35) interacts with heme c. Heme b is bound by residues His86 and His100. A run of 3 helical transmembrane segments spans residues 90–110, 116–136, and 186–206; these read ASMMVMMMVLHVFRVYLTGGF, LTWVTGVILAVVTVSFGVTGY, and AHTFVLPLAAAVLMLTHFLMI. Heme b is bound by residues His187 and His202.

The protein belongs to the cytochrome b family. PetB subfamily. As to quaternary structure, the 4 large subunits of the cytochrome b6-f complex are cytochrome b6, subunit IV (17 kDa polypeptide, PetD), cytochrome f and the Rieske protein, while the 4 small subunits are PetG, PetL, PetM and PetN. The complex functions as a dimer. Requires heme b as cofactor. Heme c is required as a cofactor.

The protein localises to the plastid. Its subcellular location is the chloroplast thylakoid membrane. Its function is as follows. Component of the cytochrome b6-f complex, which mediates electron transfer between photosystem II (PSII) and photosystem I (PSI), cyclic electron flow around PSI, and state transitions. The protein is Cytochrome b6 of Trieres chinensis (Marine centric diatom).